The primary structure comprises 653 residues: tRNA 5-methylaminomethyl-2-thiouridine biosynthesis bifunctional protein MnmC (653 aa).

The tract at residues 1 to 233 is tRNA (mnm(5)s(2)U34)-methyltransferase; it reads MKTAPITPGR…KRDITVARFT (233 aa). Residues 258 to 653 are FAD-dependent cmnm(5)s(2)U34 oxidoreductase; sequence IGAGLAGCAA…YALPRWRSDS (396 aa).

In the N-terminal section; belongs to the methyltransferase superfamily. tRNA (mnm(5)s(2)U34)-methyltransferase family. This sequence in the C-terminal section; belongs to the DAO family. The cofactor is FAD.

It localises to the cytoplasm. The catalysed reaction is 5-aminomethyl-2-thiouridine(34) in tRNA + S-adenosyl-L-methionine = 5-methylaminomethyl-2-thiouridine(34) in tRNA + S-adenosyl-L-homocysteine + H(+). Its function is as follows. Catalyzes the last two steps in the biosynthesis of 5-methylaminomethyl-2-thiouridine (mnm(5)s(2)U) at the wobble position (U34) in tRNA. Catalyzes the FAD-dependent demodification of cmnm(5)s(2)U34 to nm(5)s(2)U34, followed by the transfer of a methyl group from S-adenosyl-L-methionine to nm(5)s(2)U34, to form mnm(5)s(2)U34. This chain is tRNA 5-methylaminomethyl-2-thiouridine biosynthesis bifunctional protein MnmC, found in Methylibium petroleiphilum (strain ATCC BAA-1232 / LMG 22953 / PM1).